We begin with the raw amino-acid sequence, 574 residues long: Bifunctional NAD(P)H-hydrate repair enzyme Nnr (574 aa).

Residues methionine 1–alanine 269 form an NAD(P)H-hydrate epimerase region. The YjeF N-terminal domain maps to isoleucine 10 to lysine 231. The interval glycine 64–aspartate 68 is NADPHX 1; for epimerase activity. Residues asparagine 65 and aspartate 123 each coordinate K(+). Residues glycine 127–glycine 133 are NADPHX 1; for epimerase activity. A (6S)-NADPHX-binding site is contributed by aspartate 156. Residue serine 159 coordinates K(+). Positions isoleucine 277 to valine 568 constitute a YjeF C-terminal domain. The ADP-dependent (S)-NAD(P)H-hydrate dehydratase stretch occupies residues isoleucine 277–valine 574. Residue glycine 365 coordinates (6S)-NADPHX. The tract at residues histidine 418–arginine 424 is NADPHX 2; for dehydratase activity. ADP is bound by residues lysine 461–threonine 465 and histidine 480–glycine 489. (6S)-NADPHX is bound at residue aspartate 490.

In the N-terminal section; belongs to the NnrE/AIBP family. The protein in the C-terminal section; belongs to the NnrD/CARKD family. K(+) is required as a cofactor.

The enzyme catalyses (6S)-NADHX + ADP = AMP + phosphate + NADH + H(+). The catalysed reaction is (6S)-NADPHX + ADP = AMP + phosphate + NADPH + H(+). It carries out the reaction (6R)-NADHX = (6S)-NADHX. It catalyses the reaction (6R)-NADPHX = (6S)-NADPHX. Bifunctional enzyme that catalyzes the epimerization of the S- and R-forms of NAD(P)HX and the dehydration of the S-form of NAD(P)HX at the expense of ADP, which is converted to AMP. This allows the repair of both epimers of NAD(P)HX, a damaged form of NAD(P)H that is a result of enzymatic or heat-dependent hydration. This chain is Bifunctional NAD(P)H-hydrate repair enzyme Nnr (nnr), found in Corynebacterium glutamicum (strain ATCC 13032 / DSM 20300 / JCM 1318 / BCRC 11384 / CCUG 27702 / LMG 3730 / NBRC 12168 / NCIMB 10025 / NRRL B-2784 / 534).